The chain runs to 58 residues: Potassium channel toxin Ts16 (58 aa).

A signal peptide spans 1–16; the sequence is MHSSVFILILFSLAVI. Intrachain disulfides connect cysteine 29–cysteine 51, cysteine 34–cysteine 47, and cysteine 38–cysteine 53.

As to expression, expressed by the venom gland.

Its subcellular location is the secreted. Its function is as follows. Blocks potassium channels. This Tityus serrulatus (Brazilian scorpion) protein is Potassium channel toxin Ts16.